The primary structure comprises 341 residues: Very-long-chain 3-oxoacyl-CoA reductase (341 aa).

The chain crosses the membrane as a helical span at residues 22-42 (AVTGFLLVGIASFAAPLISTI). NADP(+) contacts are provided by Leu-67, Asp-123, Asp-131, Asn-150, Tyr-217, Lys-221, Val-250, and Thr-252. Residue Tyr-217 is the Proton donor of the active site. The active-site Lowers pKa of active site Tyr is the Lys-221.

Belongs to the short-chain dehydrogenases/reductases (SDR) family.

The protein resides in the endoplasmic reticulum membrane. The enzyme catalyses a very-long-chain (3R)-3-hydroxyacyl-CoA + NADP(+) = a very-long-chain 3-oxoacyl-CoA + NADPH + H(+). It participates in lipid metabolism; fatty acid biosynthesis. In terms of biological role, component of the microsomal membrane bound fatty acid elongation system, which produces the 26-carbon very long-chain fatty acids (VLCFA) from palmitate. Catalyzes the reduction of the 3-ketoacyl-CoA intermediate that is formed in each cycle of fatty acid elongation. VLCFAs serve as precursors for ceramide and sphingolipids. This Pyrenophora tritici-repentis (strain Pt-1C-BFP) (Wheat tan spot fungus) protein is Very-long-chain 3-oxoacyl-CoA reductase.